Reading from the N-terminus, the 302-residue chain is FeMo cofactor biosynthesis protein NifB (302 aa).

In terms of domain architecture, Radical SAM core spans 22 to 264 (HDKYGRVHLP…PQFRACGQCR (243 aa)). 3 residues coordinate [4Fe-4S] cluster: Cys36, Cys40, and Cys43. The S-adenosyl-L-methionine site is built by Gly91, Thr142, and Ile194. 2 residues coordinate [4Fe-4S] cluster: Cys260 and Cys263.

The protein belongs to the radical SAM superfamily. NifB family. In terms of assembly, monomer. [4Fe-4S] cluster is required as a cofactor.

Its pathway is cofactor biosynthesis; Fe-Mo cofactor biosynthesis. Involved in the biosynthesis of the iron-molybdenum cofactor (FeMo-co or M-cluster) found in the dinitrogenase enzyme of the nitrogenase complex in nitrogen-fixing microorganisms. NifB catalyzes the crucial step of radical SAM-dependent carbide insertion that occurs concomitant with the insertion of a 9th sulfur and the rearrangement/coupling of two [4Fe-4S] clusters into a [8Fe-9S-C] cluster, the precursor to the M-cluster. The chain is FeMo cofactor biosynthesis protein NifB from Methanocaldococcus infernus (strain DSM 11812 / JCM 15783 / ME).